We begin with the raw amino-acid sequence, 264 residues long: 5'-nucleotidase SurE (264 aa).

Positions 8, 9, 39, and 95 each coordinate a divalent metal cation.

The protein belongs to the SurE nucleotidase family. A divalent metal cation serves as cofactor.

It is found in the cytoplasm. It catalyses the reaction a ribonucleoside 5'-phosphate + H2O = a ribonucleoside + phosphate. Its function is as follows. Nucleotidase that shows phosphatase activity on nucleoside 5'-monophosphates. The polypeptide is 5'-nucleotidase SurE (Syntrophomonas wolfei subsp. wolfei (strain DSM 2245B / Goettingen)).